We begin with the raw amino-acid sequence, 305 residues long: Popeye domain-containing protein 3 (305 aa).

N-linked (GlcNAc...) asparagine glycosylation occurs at Asn-4. Helical transmembrane passes span 34–54 (SILFVVGFMGGSGFSGLLYVF), 55–75 (SLLGLGFLCSSVWAWLDVCAA), and 77–99 (IFSWNFILFAICFVQFIYVTYQV). The disordered stretch occupies residues 273–305 (PETPPVPPPRRLQRRSSGRPRPGVPNCSSPRKQ). The N-linked (GlcNAc...) asparagine glycan is linked to Asn-298.

The protein belongs to the popeye family. Expressed first preferentially in atrium and later also in the subepicardial compact layer of the ventricles.

Its subcellular location is the membrane. May play a role in the maintenance of heart function mediated, at least in part, through cAMP-binding. May play a role in the regulation of KCNK2-mediated current amplitude. The protein is Popeye domain-containing protein 3 (POPDC3) of Gallus gallus (Chicken).